A 521-amino-acid polypeptide reads, in one-letter code: DEAD-box ATP-dependent RNA helicase 1 (521 aa).

Residues methionine 1–histidine 20 form a disordered region. The Q motif signature appears at cysteine 36–valine 65. A Helicase ATP-binding domain is found at isoleucine 72–leucine 302. ATP is bound at residue serine 85–threonine 92. The DEAD box signature appears at aspartate 213 to aspartate 216. The region spanning serine 330–leucine 480 is the Helicase C-terminal domain. Residues leucine 495–aspartate 507 are compositionally biased toward basic and acidic residues. The tract at residues leucine 495–threonine 521 is disordered.

Belongs to the DEAD box helicase family. DDX51/DBP6 subfamily.

It catalyses the reaction ATP + H2O = ADP + phosphate + H(+). The sequence is that of DEAD-box ATP-dependent RNA helicase 1 from Oryza sativa subsp. japonica (Rice).